The sequence spans 323 residues: MGNTVAREDFEWVYTDQPHADRRKEILAKHPEIKALMKPDYNLIWVVMLMVAAQLTAFYLVRDLDWKWVVFWAYVFGSCISHSMTLAIHEISHNSAFGNGRAMWNRWFGIFANLPLGLPYSISFKRYHMDHHRYLGGDGIDVDIPTNFEGWFFCTRFRKFIWIVLQPFFYAIRPLCINPKPITRLEIINLLAQLFFDIVIYYLWGAKSIFYMLAGSVLGLGLHPISGHFIAEHYMFLKGHETYSYYGPLNLLTFNVGYHNEHHDFPNIPGKSLPLVKKIAAEYYDNLPQYNSWIKVLYDFVMDDTISPYSRMKRQLKGEVKQD.

The next 2 helical transmembrane spans lie at 41–61 (YNLIWVVMLMVAAQLTAFYLV) and 68–88 (WVVFWAYVFGSCISHSMTLAI). The Histidine box-1 signature appears at 89-93 (HEISH). A helical transmembrane segment spans residues 102–122 (AMWNRWFGIFANLPLGLPYSI). The short motif at 128 to 132 (HMDHH) is the Histidine box-2 element. 3 helical membrane-spanning segments follow: residues 159–179 (KFIWIVLQPFFYAIRPLCINP), 185–205 (LEIINLLAQLFFDIVIYYLWG), and 209–229 (IFYMLAGSVLGLGLHPISGHF). A Histidine box-3 motif is present at residues 259-263 (HNEHH).

It belongs to the fatty acid desaturase type 1 family. DEGS subfamily. In terms of assembly, interacts with RLBP1; the interaction increases synthesis of chromophore-precursors by DEGS1. In terms of tissue distribution, expressed in retina and retinal pigment epithelium by Mueller cells (at protein level).

Its subcellular location is the endoplasmic reticulum membrane. It carries out the reaction an N-acylsphinganine + 2 Fe(II)-[cytochrome b5] + O2 + 2 H(+) = an N-acylsphing-4-enine + 2 Fe(III)-[cytochrome b5] + 2 H2O. The catalysed reaction is all-trans-retinol = 11-cis-retinol. The enzyme catalyses all-trans-retinol = 9-cis-retinol. It catalyses the reaction all-trans-retinol = 13-cis-retinol. It carries out the reaction 11-cis-retinol = 13-cis-retinol. The catalysed reaction is 11-cis-retinol = 9-cis-retinol. In terms of biological role, has sphingolipid-delta-4-desaturase activity. Converts D-erythro-sphinganine to D-erythro-sphingosine (E-sphing-4-enine). Catalyzes the equilibrium isomerization of retinols. This chain is Sphingolipid delta(4)-desaturase DES1 (DEGS1), found in Gallus gallus (Chicken).